A 394-amino-acid chain; its full sequence is Elongation factor Tu (394 aa).

The 195-residue stretch at Lys10–Glu204 folds into the tr-type G domain. The segment at Gly19 to Thr26 is G1. Gly19–Thr26 contacts GTP. Mg(2+) is bound at residue Thr26. The G2 stretch occupies residues Gly60–Asn64. A G3 region spans residues Asp81 to Gly84. Residues Asp81 to His85 and Asn136 to Asp139 contribute to the GTP site. Residues Asn136–Asp139 form a G4 region. Residues Ser174–Leu176 form a G5 region.

The protein belongs to the TRAFAC class translation factor GTPase superfamily. Classic translation factor GTPase family. EF-Tu/EF-1A subfamily. In terms of assembly, monomer.

Its subcellular location is the cytoplasm. The enzyme catalyses GTP + H2O = GDP + phosphate + H(+). Its function is as follows. GTP hydrolase that promotes the GTP-dependent binding of aminoacyl-tRNA to the A-site of ribosomes during protein biosynthesis. The sequence is that of Elongation factor Tu from Mycoplasma pneumoniae (strain ATCC 29342 / M129 / Subtype 1) (Mycoplasmoides pneumoniae).